Consider the following 573-residue polypeptide: Dihydroxy-acid dehydratase (573 aa).

Cys-62 lines the [2Fe-2S] cluster pocket. Position 94 (Asp-94) interacts with Mg(2+). [2Fe-2S] cluster is bound at residue Cys-135. Mg(2+) contacts are provided by Asp-136 and Lys-137. Position 137 is an N6-carboxylysine (Lys-137). Cys-212 contacts [2Fe-2S] cluster. Glu-463 is a Mg(2+) binding site. Ser-489 (proton acceptor) is an active-site residue.

It belongs to the IlvD/Edd family. As to quaternary structure, homodimer. Requires [2Fe-2S] cluster as cofactor. Mg(2+) is required as a cofactor.

The catalysed reaction is (2R)-2,3-dihydroxy-3-methylbutanoate = 3-methyl-2-oxobutanoate + H2O. It catalyses the reaction (2R,3R)-2,3-dihydroxy-3-methylpentanoate = (S)-3-methyl-2-oxopentanoate + H2O. It functions in the pathway amino-acid biosynthesis; L-isoleucine biosynthesis; L-isoleucine from 2-oxobutanoate: step 3/4. The protein operates within amino-acid biosynthesis; L-valine biosynthesis; L-valine from pyruvate: step 3/4. Its function is as follows. Functions in the biosynthesis of branched-chain amino acids. Catalyzes the dehydration of (2R,3R)-2,3-dihydroxy-3-methylpentanoate (2,3-dihydroxy-3-methylvalerate) into 2-oxo-3-methylpentanoate (2-oxo-3-methylvalerate) and of (2R)-2,3-dihydroxy-3-methylbutanoate (2,3-dihydroxyisovalerate) into 2-oxo-3-methylbutanoate (2-oxoisovalerate), the penultimate precursor to L-isoleucine and L-valine, respectively. In Renibacterium salmoninarum (strain ATCC 33209 / DSM 20767 / JCM 11484 / NBRC 15589 / NCIMB 2235), this protein is Dihydroxy-acid dehydratase.